We begin with the raw amino-acid sequence, 367 residues long: Fructose-1,6-bisphosphatase class 1 3 (367 aa).

The protein belongs to the FBPase class 1 family. Homotetramer.

It localises to the cytoplasm. It catalyses the reaction beta-D-fructose 1,6-bisphosphate + H2O = beta-D-fructose 6-phosphate + phosphate. Its pathway is carbohydrate biosynthesis; gluconeogenesis. The chain is Fructose-1,6-bisphosphatase class 1 3 from Paraburkholderia phymatum (strain DSM 17167 / CIP 108236 / LMG 21445 / STM815) (Burkholderia phymatum).